A 121-amino-acid polypeptide reads, in one-letter code: Small ribosomal subunit protein uS13 (121 aa).

The disordered stretch occupies residues 93–121 (RGLPMRGQRTRTNARTRKGPRKAAQSLKK).

It belongs to the universal ribosomal protein uS13 family. Part of the 30S ribosomal subunit. Forms a loose heterodimer with protein S19. Forms two bridges to the 50S subunit in the 70S ribosome.

Its function is as follows. Located at the top of the head of the 30S subunit, it contacts several helices of the 16S rRNA. In the 70S ribosome it contacts the 23S rRNA (bridge B1a) and protein L5 of the 50S subunit (bridge B1b), connecting the 2 subunits; these bridges are implicated in subunit movement. Contacts the tRNAs in the A and P-sites. In Albidiferax ferrireducens (strain ATCC BAA-621 / DSM 15236 / T118) (Rhodoferax ferrireducens), this protein is Small ribosomal subunit protein uS13.